Here is a 334-residue protein sequence, read N- to C-terminus: Chitin synthase export chaperone (334 aa).

Helical transmembrane passes span I49–M69, I85–G105, G123–Y143, L159–L179, V185–M205, L220–F240, and I244–L264.

It belongs to the CHS7 family.

The protein resides in the endoplasmic reticulum membrane. Chaperone required for the export of the chitin synthase chs3 from the endoplasmic reticulum. Plays a critical role in cell wall integrity and virulence. In Fusarium oxysporum f. sp. lycopersici (strain 4287 / CBS 123668 / FGSC 9935 / NRRL 34936) (Fusarium vascular wilt of tomato), this protein is Chitin synthase export chaperone.